The following is a 180-amino-acid chain: Protein YOP1 (180 aa).

Residue S2 is modified to N-acetylserine. Positions 2 to 17 (SEYASSIHSQMKQFDT) are interaction with YIP1. Residues 2-35 (SEYASSIHSQMKQFDTKYSGNRILQQLENKTNLP) are Cytoplasmic-facing. The chain crosses the membrane as a helical span at residues 36 to 55 (KSYLVAGLGFAYLLLIFINV). The Lumenal portion of the chain corresponds to 56–57 (GG). Residues 58-78 (VGEILSNFAGFVLPAYLSLVA) form a helical membrane-spanning segment. Topologically, residues 79–88 (LKTPTSTDDT) are cytoplasmic. A helical transmembrane segment spans residues 89-105 (QLLTYWIVFSFLSVIEF). The Lumenal portion of the chain corresponds to 106-108 (WSK). Residues 109–127 (AILYLIPFYWFLKTVFLIY) traverse the membrane as a helical segment. Residues 128–180 (IALPQTGGARMIYQKIVAPLTDRYILRDVSKTEKDEIRASVNEASKATGASVH) are Cytoplasmic-facing.

Belongs to the DP1 family. As to quaternary structure, oligomer. Interacts with YIP1.

The protein resides in the endoplasmic reticulum membrane. Its subcellular location is the golgi apparatus membrane. In terms of biological role, required to generate and maintain the structure of the tubular endoplasmic reticulum network and the vacuole. Induces high curvature in membranes and causes membrane tubule formation. Involved in membrane/vesicle trafficking. The protein is Protein YOP1 (YOP1) of Saccharomyces cerevisiae (strain ATCC 204508 / S288c) (Baker's yeast).